Here is a 292-residue protein sequence, read N- to C-terminus: Small ribosomal subunit biogenesis GTPase RsgA (292 aa).

The CP-type G domain maps to 62–213 (KNSLVRPPIV…IADTPGFSSL (152 aa)). Residues 111-114 (SKMD) and 156-164 (GQTGVGKST) each bind GTP. Positions 237, 242, 244, and 250 each coordinate Zn(2+).

Belongs to the TRAFAC class YlqF/YawG GTPase family. RsgA subfamily. Monomer. Associates with 30S ribosomal subunit, binds 16S rRNA. It depends on Zn(2+) as a cofactor.

It is found in the cytoplasm. One of several proteins that assist in the late maturation steps of the functional core of the 30S ribosomal subunit. Helps release RbfA from mature subunits. May play a role in the assembly of ribosomal proteins into the subunit. Circularly permuted GTPase that catalyzes slow GTP hydrolysis, GTPase activity is stimulated by the 30S ribosomal subunit. In Streptococcus pneumoniae serotype 4 (strain ATCC BAA-334 / TIGR4), this protein is Small ribosomal subunit biogenesis GTPase RsgA.